The sequence spans 189 residues: ComE operon protein 2 (189 aa).

In terms of domain architecture, CMP/dCMP-type deaminase spans 5–132; sequence SWNQYFMAQS…PYAQELFEQA (128 aa). A Zn(2+)-binding site is contributed by histidine 70. Residue glutamate 72 is the Proton donor of the active site. Zn(2+) is bound by residues cysteine 98 and cysteine 101.

This sequence belongs to the cytidine and deoxycytidylate deaminase family. Requires Zn(2+) as cofactor.

In terms of biological role, dispensable for transformability. The chain is ComE operon protein 2 (comEB) from Bacillus subtilis (strain 168).